The following is a 1128-amino-acid chain: Scavenger receptor cysteine-rich domain superfamily protein (1128 aa).

The first 24 residues, 1 to 24 (MTSLRRGNICWVAVCAALLTLTRG), serve as a signal peptide directing secretion. At 25–1051 (IDVIAKPSRT…VGAQAGPAGG (1027 aa)) the chain is on the extracellular side. 9 SRCR domains span residues 40-140 (VQLV…VVCN), 143-245 (VRLA…VICT), 248-348 (IRLV…VICT), 351-450 (VRLV…AKCQ), 453-553 (VQLV…VVCR), 555-654 (IRLA…VVCR), 657-757 (LRLA…VVCT), 759-866 (LRLT…VLCK), and 868-968 (IRLV…VQCK). Disulfide bonds link Cys65–Cys129, Cys78–Cys139, Cys109–Cys119, Cys168–Cys234, Cys181–Cys244, Cys212–Cys222, Cys273–Cys337, Cys286–Cys347, Cys316–Cys326, Cys376–Cys439, Cys389–Cys449, Cys419–Cys429, Cys478–Cys542, Cys491–Cys552, Cys522–Cys532, Cys583–Cys644, Cys596–Cys653, Cys624–Cys634, Cys682–Cys746, Cys695–Cys756, and Cys726–Cys736. Asn87 carries N-linked (GlcNAc...) asparagine glycosylation. Asn190 and Asn194 each carry an N-linked (GlcNAc...) asparagine glycan. N-linked (GlcNAc...) asparagine glycosylation is present at Asn229. N-linked (GlcNAc...) asparagine glycosylation occurs at Asn422. Residues Asn601 and Asn612 are each glycosylated (N-linked (GlcNAc...) asparagine). 4 N-linked (GlcNAc...) asparagine glycosylation sites follow: Asn765, Asn808, Asn834, and Asn936. 6 cysteine pairs are disulfide-bonded: Cys803/Cys865, Cys833/Cys843, Cys906/Cys967, Cys937/Cys947, Cys971/Cys1013, and Cys999/Cys1026. The region spanning 969–1028 (AGCDWPGPIRHGSFSPNRSSYDPLTTIDVKCDAGYELMGSKTLQCVTGCDWSRPTPECQR) is the Sushi domain. Asn985 carries N-linked (GlcNAc...) asparagine glycosylation. A glycan (N-linked (GlcNAc...) asparagine) is linked at Asn1031. A helical transmembrane segment spans residues 1052–1072 (VMLIIGIILGAVVMMLIACVA). Over 1073-1128 (LYLKGRNKNIGRGNPATTSAIWKPKKEFDELKEPVLSFSAMTAGGAGPEDGMGEDI) the chain is Cytoplasmic.

In terms of tissue distribution, from the mid-gastrula stage, expressed only in mesenchyme cells that are migrating toward the body wall. At the brachiolaria stage, expressed in presumptive coelomocytes of the coelomic pouch. Also expressed in adult coelomocytes (at protein level).

It is found in the cytoplasmic vesicle membrane. Functionally, involved in aggregate formation and phagocytosis by larval mesenchyme cells and adult coelomocytes. Binds to bacteria and may act as an opsonin in the innate immune system. This is Scavenger receptor cysteine-rich domain superfamily protein from Patiria pectinifera (Starfish).